The following is a 122-amino-acid chain: Large ribosomal subunit protein uL14 (122 aa).

Belongs to the universal ribosomal protein uL14 family. Part of the 50S ribosomal subunit. Forms a cluster with proteins L3 and L19. In the 70S ribosome, L14 and L19 interact and together make contacts with the 16S rRNA in bridges B5 and B8.

Its function is as follows. Binds to 23S rRNA. Forms part of two intersubunit bridges in the 70S ribosome. This Beijerinckia indica subsp. indica (strain ATCC 9039 / DSM 1715 / NCIMB 8712) protein is Large ribosomal subunit protein uL14.